Here is a 100-residue protein sequence, read N- to C-terminus: Urease subunit gamma (100 aa).

The protein belongs to the urease gamma subunit family. As to quaternary structure, heterotrimer of UreA (gamma), UreB (beta) and UreC (alpha) subunits. Three heterotrimers associate to form the active enzyme.

It localises to the cytoplasm. It catalyses the reaction urea + 2 H2O + H(+) = hydrogencarbonate + 2 NH4(+). It functions in the pathway nitrogen metabolism; urea degradation; CO(2) and NH(3) from urea (urease route): step 1/1. The polypeptide is Urease subunit gamma (Burkholderia mallei (strain NCTC 10247)).